A 241-amino-acid chain; its full sequence is Chromosome partition protein MukE (241 aa).

The tract at residues 207 to 241 is disordered; the sequence is DGEAATPDSLSQEKSAVKNDEEIEDELDEGLGEEE. A compositionally biased stretch (acidic residues) spans 227 to 241; that stretch reads EEIEDELDEGLGEEE.

Belongs to the MukE family. In terms of assembly, interacts, and probably forms a ternary complex, with MukF and MukB. The complex formation is stimulated by calcium or magnesium.

The protein localises to the cytoplasm. It is found in the nucleoid. Its function is as follows. Involved in chromosome condensation, segregation and cell cycle progression. May participate in facilitating chromosome segregation by condensation DNA from both sides of a centrally located replisome during cell division. Probably acts via its interaction with MukB and MukF. The protein is Chromosome partition protein MukE of Mannheimia succiniciproducens (strain KCTC 0769BP / MBEL55E).